Reading from the N-terminus, the 196-residue chain is Imidazoleglycerol-phosphate dehydratase (196 aa).

The protein belongs to the imidazoleglycerol-phosphate dehydratase family.

Its subcellular location is the cytoplasm. The enzyme catalyses D-erythro-1-(imidazol-4-yl)glycerol 3-phosphate = 3-(imidazol-4-yl)-2-oxopropyl phosphate + H2O. It participates in amino-acid biosynthesis; L-histidine biosynthesis; L-histidine from 5-phospho-alpha-D-ribose 1-diphosphate: step 6/9. The protein is Imidazoleglycerol-phosphate dehydratase of Clostridium botulinum (strain Okra / Type B1).